The sequence spans 78 residues: cAMP-dependent protein kinase inhibitor beta (78 aa).

Positions 1–10 are enriched in basic and acidic residues; sequence MRTDSSKMTD. A disordered region spans residues 1 to 78; that stretch reads MRTDSSKMTD…QLEKPQNEEK (78 aa). A compositionally biased stretch (polar residues) spans 33-42; the sequence is IQSSAATDGT. The span at 53–78 shows a compositional bias: basic and acidic residues; it reads SVKEDAKEKDEKTTQDQLEKPQNEEK.

This sequence belongs to the PKI family.

Functionally, extremely potent competitive inhibitor of cAMP-dependent protein kinase activity, this protein interacts with the catalytic subunit of the enzyme after the cAMP-induced dissociation of its regulatory chains. The chain is cAMP-dependent protein kinase inhibitor beta (PKIB) from Homo sapiens (Human).